The primary structure comprises 334 residues: MSLDIDQIALHQLIKRDEQTLDVVLRDSLLPTNAVVEEMMAELHRVYSAKSKAYGLFNEQSELADALKRSRKGDEDFLSFSRAATGRLRDELAKYPFAEGGVVLFCQYRYLAVEYLLISVLSSCHSMRVNEQLDLSTTHYLDINRADIVARIDLTEWETNPESTRYLTFLKGRVGRKVSDFFMDFLSAAEGLDTKAQNRGLLQAVDDYCADAELGKNERQAYRQQVYSYCNEQLRAGEEIALQVLAQELPKLGEKDFQQFSAEQGYALEESFPADRGTLRQLTKFAGSGGGLSINFDALLLDERIFWDAATDTLTIKGTPPNLRDQLQRRAGSK.

Belongs to the YejK family.

Its subcellular location is the cytoplasm. It is found in the nucleoid. This Yersinia pseudotuberculosis serotype IB (strain PB1/+) protein is Nucleoid-associated protein YPTS_1390.